The sequence spans 203 residues: MSSVPIRTNFSLKGSSKLVSEFFEYAVNSILFQRGIYPAEDFKVVRKYGLNMLVSVDEEVKTYIRKIVSQLHKWMFAKKIQKLILVITSKCSGEDLERWQFNVEMVDTADQFQNIGNKEDELRVQKEIQALIRQITATVTFLPQLEEQCTFNVLVYADKDSEVPTDWVDSDPRILRDAEQVQLRSFSTSMHKIDCQVAYRVNP.

The HORMA domain maps to 13–197 (KGSSKLVSEF…TSMHKIDCQV (185 aa)).

It belongs to the MAD2 family. In terms of assembly, interacts with mad3 and slp1.

It localises to the nucleus. Feedback control that prevents cells with incompletely assembled spindles from leaving mitosis. It interacts with the anaphase promoting complex/cyclosome (APC/C) thereby inhibiting APC/C-dependent proteolysis, a step required for exit from mitosis. The chain is Mitotic spindle checkpoint component mad2 from Schizosaccharomyces pombe (strain 972 / ATCC 24843) (Fission yeast).